We begin with the raw amino-acid sequence, 185 residues long: Elongation factor P (185 aa).

It belongs to the elongation factor P family.

It is found in the cytoplasm. It participates in protein biosynthesis; polypeptide chain elongation. In terms of biological role, involved in peptide bond synthesis. Stimulates efficient translation and peptide-bond synthesis on native or reconstituted 70S ribosomes in vitro. Probably functions indirectly by altering the affinity of the ribosome for aminoacyl-tRNA, thus increasing their reactivity as acceptors for peptidyl transferase. This is Elongation factor P from Lachnoclostridium phytofermentans (strain ATCC 700394 / DSM 18823 / ISDg) (Clostridium phytofermentans).